A 164-amino-acid chain; its full sequence is Peptide methionine sulfoxide reductase MsrA (164 aa).

Cys-16 is an active-site residue.

This sequence belongs to the MsrA Met sulfoxide reductase family.

The enzyme catalyses L-methionyl-[protein] + [thioredoxin]-disulfide + H2O = L-methionyl-(S)-S-oxide-[protein] + [thioredoxin]-dithiol. The catalysed reaction is [thioredoxin]-disulfide + L-methionine + H2O = L-methionine (S)-S-oxide + [thioredoxin]-dithiol. Has an important function as a repair enzyme for proteins that have been inactivated by oxidation. Catalyzes the reversible oxidation-reduction of methionine sulfoxide in proteins to methionine. The polypeptide is Peptide methionine sulfoxide reductase MsrA (Methanoculleus marisnigri (strain ATCC 35101 / DSM 1498 / JR1)).